The primary structure comprises 700 residues: Elongation factor G (700 aa).

The tr-type G domain occupies 8–290 (ERYRNIGISA…AVIDYLPAPT (283 aa)). GTP-binding positions include 17–24 (AHIDAGKT), 88–92 (DTPGH), and 142–145 (NKMD).

It belongs to the TRAFAC class translation factor GTPase superfamily. Classic translation factor GTPase family. EF-G/EF-2 subfamily.

Its subcellular location is the cytoplasm. In terms of biological role, catalyzes the GTP-dependent ribosomal translocation step during translation elongation. During this step, the ribosome changes from the pre-translocational (PRE) to the post-translocational (POST) state as the newly formed A-site-bound peptidyl-tRNA and P-site-bound deacylated tRNA move to the P and E sites, respectively. Catalyzes the coordinated movement of the two tRNA molecules, the mRNA and conformational changes in the ribosome. This is Elongation factor G from Glaesserella parasuis serovar 5 (strain SH0165) (Haemophilus parasuis).